Consider the following 158-residue polypeptide: Transcription elongation factor GreA (158 aa).

Residues 8–74 (TKGGYNKLKD…TLERVLSTAT (67 aa)) are a coiled coil.

This sequence belongs to the GreA/GreB family.

Its function is as follows. Necessary for efficient RNA polymerase transcription elongation past template-encoded arresting sites. The arresting sites in DNA have the property of trapping a certain fraction of elongating RNA polymerases that pass through, resulting in locked ternary complexes. Cleavage of the nascent transcript by cleavage factors such as GreA or GreB allows the resumption of elongation from the new 3'terminus. GreA releases sequences of 2 to 3 nucleotides. In Chloroherpeton thalassium (strain ATCC 35110 / GB-78), this protein is Transcription elongation factor GreA.